The primary structure comprises 602 residues: Isocitrate dehydrogenase kinase/phosphatase (602 aa).

ATP is bound by residues 325-331 and Lys346; that span reads APGIKGM. Residue Asp381 is part of the active site.

This sequence belongs to the AceK family.

The protein localises to the cytoplasm. It catalyses the reaction L-seryl-[isocitrate dehydrogenase] + ATP = O-phospho-L-seryl-[isocitrate dehydrogenase] + ADP + H(+). In terms of biological role, bifunctional enzyme which can phosphorylate or dephosphorylate isocitrate dehydrogenase (IDH) on a specific serine residue. This is a regulatory mechanism which enables bacteria to bypass the Krebs cycle via the glyoxylate shunt in response to the source of carbon. When bacteria are grown on glucose, IDH is fully active and unphosphorylated, but when grown on acetate or ethanol, the activity of IDH declines drastically concomitant with its phosphorylation. In Paracidovorax citrulli (strain AAC00-1) (Acidovorax citrulli), this protein is Isocitrate dehydrogenase kinase/phosphatase.